The chain runs to 405 residues: Glucose-1-phosphate adenylyltransferase (405 aa).

Residues Tyr-99, Gly-164, Glu-179–Lys-180, and Ser-197 each bind alpha-D-glucose 1-phosphate.

The protein belongs to the bacterial/plant glucose-1-phosphate adenylyltransferase family. Homotetramer.

The enzyme catalyses alpha-D-glucose 1-phosphate + ATP + H(+) = ADP-alpha-D-glucose + diphosphate. The protein operates within glycan biosynthesis; glycogen biosynthesis. Functionally, involved in the biosynthesis of ADP-glucose, a building block required for the elongation reactions to produce glycogen. Catalyzes the reaction between ATP and alpha-D-glucose 1-phosphate (G1P) to produce pyrophosphate and ADP-Glc. The protein is Glucose-1-phosphate adenylyltransferase of Corynebacterium aurimucosum (strain ATCC 700975 / DSM 44827 / CIP 107346 / CN-1) (Corynebacterium nigricans).